The sequence spans 170 residues: Peptide deformylase (170 aa).

Fe cation contacts are provided by Cys91 and His133. Residue Glu134 is part of the active site. His137 is a binding site for Fe cation.

It belongs to the polypeptide deformylase family. Fe(2+) serves as cofactor.

The enzyme catalyses N-terminal N-formyl-L-methionyl-[peptide] + H2O = N-terminal L-methionyl-[peptide] + formate. Functionally, removes the formyl group from the N-terminal Met of newly synthesized proteins. Requires at least a dipeptide for an efficient rate of reaction. N-terminal L-methionine is a prerequisite for activity but the enzyme has broad specificity at other positions. This is Peptide deformylase from Pectobacterium carotovorum subsp. carotovorum (strain PC1).